Consider the following 264-residue polypeptide: Protein DSE2 (264 aa).

The signal sequence occupies residues 1 to 23; it reads MQFKKSSIVSFLSLLGSLTKAAA. Low complexity predominate over residues 75–92; sequence TRESVVTSTLSSTSLLPE. Residues 75-213 are disordered; sequence TRESVVTSTL…STSTSSSSVL (139 aa). Positions 93 to 104 are enriched in acidic residues; sequence TTEESTQEDEQT. 3 stretches are compositionally biased toward low complexity: residues 105–147, 157–168, and 178–211; these read TDFT…PTTS, STSVITTKSTSK, and TSTL…SSSS. The GPI-anchor amidated aspartate moiety is linked to residue D247. Positions 248 to 264 are cleaved as a propeptide — removed in mature form; that stretch reads AATTYTKTRTVYATISS.

The protein localises to the secreted. It is found in the cell wall. It localises to the membrane. Involved in pseudohyphal growth, cell wall metabolism and required for the separation of the mother and daughter cells. This chain is Protein DSE2 (DSE2), found in Kluyveromyces lactis (strain ATCC 8585 / CBS 2359 / DSM 70799 / NBRC 1267 / NRRL Y-1140 / WM37) (Yeast).